Reading from the N-terminus, the 511-residue chain is Maturase K (511 aa).

Belongs to the intron maturase 2 family. MatK subfamily.

The protein localises to the plastid. It localises to the chloroplast. Functionally, usually encoded in the trnK tRNA gene intron. Probably assists in splicing its own and other chloroplast group II introns. The sequence is that of Maturase K from Paulownia tomentosa (Princess tree).